The following is a 317-amino-acid chain: Ribosomal protein L11 methyltransferase (317 aa).

4 residues coordinate S-adenosyl-L-methionine: threonine 158, glycine 179, aspartate 201, and asparagine 244.

It belongs to the methyltransferase superfamily. PrmA family.

It is found in the cytoplasm. The catalysed reaction is L-lysyl-[protein] + 3 S-adenosyl-L-methionine = N(6),N(6),N(6)-trimethyl-L-lysyl-[protein] + 3 S-adenosyl-L-homocysteine + 3 H(+). Its function is as follows. Methylates ribosomal protein L11. The sequence is that of Ribosomal protein L11 methyltransferase from Streptococcus pyogenes serotype M4 (strain MGAS10750).